We begin with the raw amino-acid sequence, 217 residues long: Ras-related protein Rab11B (217 aa).

21–28 (GDSGVGKS) serves as a coordination point for GTP. An Effector region motif is present at residues 43 to 51 (SKSTIGVEF). GTP-binding positions include 69-73 (DTAGQ) and 127-130 (NKAD). S-geranylgeranyl cysteine attachment occurs at residues Cys-214 and Cys-215.

The protein belongs to the small GTPase superfamily. Rab family.

It localises to the cell membrane. This is Ras-related protein Rab11B (RAB11B) from Nicotiana tabacum (Common tobacco).